The chain runs to 60 residues: Large ribosomal subunit protein uL30 (60 aa).

This sequence belongs to the universal ribosomal protein uL30 family. Part of the 50S ribosomal subunit.

The chain is Large ribosomal subunit protein uL30 from Bacillus pumilus (strain SAFR-032).